A 583-amino-acid chain; its full sequence is MLKLISRNAINKNKIILFRLYTTTINSSNNGSTIREWKKPSLENSYDTGIMVKNSLFKNGNVPFLISNCSEKNQRPISWYTCGPTVYSSSHIGHARNYMTVDIIQRILINYFRFNIIHVMGLTDIDDKIINKSKQELISASELSKKFEQEFFEDLKSLNIKPPMFTTRVSEHIDEIIKYIEKIKENQLTYESTKSVIFDVNKFGIDRYCSLRAANQQIKSDDTLLEKDKKSSQDFVLWKAYNENIDIDGTGNPVCWDSPFGKGRPGWHIECSAMIDSIFKDHLDVHSGGVDLEFPHHQNEIAQCEGHSHSHGSGDAESTQWANYFFHIGHLILNNEKMSKSLGNVITIRDFLSRYSANSLRWICLIHKYNDPLSFSDETLQLCISKEIKFLNWFKIVRSKLKLEQTSVNKVKKTFNHSIELLNQLSETKYLIEKDLKDDFNTPSVIKRLELLMKQTNESMNSIDTDLLFNVQDYVESILNIFGLEVNSEISDHNKTDESNQFLLEKLLDFRSDVKNLAKNEKSLDQIKSKIYQITDQLRSDCQSEISLRVSDIPDKGTNKPYTVDWLDKNHIQLLNIKKQSKK.

C82 contributes to the Zn(2+) binding site. G83 is a binding site for L-cysteine. Positions 84 to 94 (PTVYSSSHIGH) match the 'HIGH' region motif. An L-cysteine-binding site is contributed by T123. The short motif at 128 to 131 (KIIN) is the 'KIIK' region element. Zn(2+) contacts are provided by C271, H296, and E300. H296 contributes to the L-cysteine binding site. The 'KMSKS' region signature appears at 337-341 (KMSKS). Residue K340 coordinates ATP.

Belongs to the class-I aminoacyl-tRNA synthetase family. Requires Zn(2+) as cofactor.

It localises to the mitochondrion. It carries out the reaction tRNA(Cys) + L-cysteine + ATP = L-cysteinyl-tRNA(Cys) + AMP + diphosphate. Mitochondrial cysteine-specific aminoacyl-tRNA synthetase that catalyzes the ATP-dependent ligation of cysteine to tRNA(Cys). In terms of biological role, in addition to its role as an aminoacyl-tRNA synthetase, has also cysteine persulfide synthase activity. Produces reactive persulfide species such as cysteine persulfide (CysSSH) from substrate cysteine and mediate direct incorporation of CysSSH into proteins during translations, resulting in protein persulfides and polysulfides. CysSSHs behave as potent antioxidants and cellular protectants. In Dictyostelium discoideum (Social amoeba), this protein is Probable cysteine--tRNA ligase, mitochondrial (mcysS).